The following is a 273-amino-acid chain: Outer surface protein A (273 aa).

An N-terminal signal peptide occupies residues 1–16 (MKKYLLGIGLILALIA). The N-palmitoyl cysteine moiety is linked to residue cysteine 17. Residue cysteine 17 is the site of S-diacylglycerol cysteine attachment.

The protein belongs to the OspA lipoprotein family.

Its subcellular location is the cell outer membrane. The protein localises to the cell surface. This Borreliella burgdorferi (Lyme disease spirochete) protein is Outer surface protein A.